A 145-amino-acid chain; its full sequence is Large ribosomal subunit protein uL15 (145 aa).

Residues 1–58 form a disordered region; it reads MFSLLKPKGAAKRRKIVGRGPGSGLGKTSGRGQKGQKARNTSPRLGFEGGQTPLYRRL. A compositionally biased stretch (gly residues) spans 19–33; the sequence is RGPGSGLGKTSGRGQ.

Belongs to the universal ribosomal protein uL15 family. As to quaternary structure, part of the 50S ribosomal subunit.

In terms of biological role, binds to the 23S rRNA. This is Large ribosomal subunit protein uL15 from Borreliella afzelii (strain PKo) (Borrelia afzelii).